Here is a 678-residue protein sequence, read N- to C-terminus: DNA ligase (678 aa).

Residues 47-51, 96-97, and glutamate 122 contribute to the NAD(+) site; these read DSDYD and SL. The active-site N6-AMP-lysine intermediate is lysine 124. Positions 145, 182, 300, and 324 each coordinate NAD(+). Residues cysteine 418, cysteine 421, cysteine 436, and cysteine 442 each contribute to the Zn(2+) site. Residues 602 to 678 form the BRCT domain; the sequence is AYNESFTGKT…ILEDNLKDLL (77 aa).

Belongs to the NAD-dependent DNA ligase family. LigA subfamily. Requires Mg(2+) as cofactor. The cofactor is Mn(2+).

It catalyses the reaction NAD(+) + (deoxyribonucleotide)n-3'-hydroxyl + 5'-phospho-(deoxyribonucleotide)m = (deoxyribonucleotide)n+m + AMP + beta-nicotinamide D-nucleotide.. In terms of biological role, DNA ligase that catalyzes the formation of phosphodiester linkages between 5'-phosphoryl and 3'-hydroxyl groups in double-stranded DNA using NAD as a coenzyme and as the energy source for the reaction. It is essential for DNA replication and repair of damaged DNA. This chain is DNA ligase, found in Francisella tularensis subsp. holarctica (strain OSU18).